The chain runs to 109 residues: Sperm-specific class P protein 10 (109 aa).

The 108-residue stretch at 2–109 (SLTADPPACT…TVTIPMSATA (108 aa)) folds into the MSP domain.

Expressed at higher level in testis.

The sequence is that of Sperm-specific class P protein 10 (ssp-10) from Caenorhabditis elegans.